We begin with the raw amino-acid sequence, 276 residues long: WIMGHMVNKIEQINEFLDLGANSIEVDIAFDELGYPEYTYHGVPCDCKRYCTKSEKIDDFIEALSAATTPGNPKFRKELTLVVFDLKTGGFDASRMYKSGKAFAELIQFSYWKGSDDAGRAYIVLSLPKLDHYEFIKAFREHFDTSTFKNLLEERVGYDFSGNEDMGLTRVVLNKAGVNDREHVWQGDGITNCILRSLDRVKAAVAIRDSATGYINKVYFWTIQAYSSVSDALNAEVDGIMTNEPDVIANVLKEDAFKDRFRLATYRDNPWETFKR.

His-5 is a catalytic residue. Glu-25 and Asp-27 together coordinate Mg(2+). Catalysis depends on His-41, which acts as the Nucleophile. Intrachain disulfides connect Cys-45–Cys-51 and Cys-47–Cys-193. Asp-85 lines the Mg(2+) pocket.

Belongs to the arthropod phospholipase D family. Class II subfamily. Requires Mg(2+) as cofactor. Expressed by the venom gland.

The protein localises to the secreted. It catalyses the reaction an N-(acyl)-sphingosylphosphocholine = an N-(acyl)-sphingosyl-1,3-cyclic phosphate + choline. The catalysed reaction is an N-(acyl)-sphingosylphosphoethanolamine = an N-(acyl)-sphingosyl-1,3-cyclic phosphate + ethanolamine. It carries out the reaction a 1-acyl-sn-glycero-3-phosphocholine = a 1-acyl-sn-glycero-2,3-cyclic phosphate + choline. The enzyme catalyses a 1-acyl-sn-glycero-3-phosphoethanolamine = a 1-acyl-sn-glycero-2,3-cyclic phosphate + ethanolamine. Functionally, dermonecrotic toxins cleave the phosphodiester linkage between the phosphate and headgroup of certain phospholipids (sphingolipid and lysolipid substrates), forming an alcohol (often choline) and a cyclic phosphate. This toxin acts on sphingomyelin (SM). It may also act on ceramide phosphoethanolamine (CPE), lysophosphatidylcholine (LPC) and lysophosphatidylethanolamine (LPE), but not on lysophosphatidylserine (LPS), and lysophosphatidylglycerol (LPG). It acts by transphosphatidylation, releasing exclusively cyclic phosphate products as second products. Induces dermonecrosis, hemolysis, increased vascular permeability, edema, inflammatory response, and platelet aggregation. In Loxosceles laeta (South American recluse spider), this protein is Dermonecrotic toxin LlSicTox-alphaIV2ii.